The following is a 502-amino-acid chain: Glycerol kinase (502 aa).

Thr-13 serves as a coordination point for ADP. Residues Thr-13, Thr-14, and Ser-15 each coordinate ATP. Thr-13 contacts sn-glycerol 3-phosphate. Residue Arg-17 participates in ADP binding. Sn-glycerol 3-phosphate contacts are provided by Arg-83, Glu-84, Tyr-136, and Asp-246. Glycerol contacts are provided by Arg-83, Glu-84, Tyr-136, Asp-246, and Gln-247. ADP is bound by residues Thr-268 and Gly-311. Residues Thr-268, Gly-311, Gln-315, and Gly-412 each coordinate ATP. Residues Gly-412 and Asn-416 each contribute to the ADP site.

The protein belongs to the FGGY kinase family.

It carries out the reaction glycerol + ATP = sn-glycerol 3-phosphate + ADP + H(+). The protein operates within polyol metabolism; glycerol degradation via glycerol kinase pathway; sn-glycerol 3-phosphate from glycerol: step 1/1. Inhibited by fructose 1,6-bisphosphate (FBP). Functionally, key enzyme in the regulation of glycerol uptake and metabolism. Catalyzes the phosphorylation of glycerol to yield sn-glycerol 3-phosphate. The protein is Glycerol kinase of Francisella tularensis subsp. holarctica (strain FTNF002-00 / FTA).